A 187-amino-acid chain; its full sequence is Ribosome-recycling factor (187 aa).

The protein belongs to the RRF family.

It localises to the cytoplasm. Functionally, responsible for the release of ribosomes from messenger RNA at the termination of protein biosynthesis. May increase the efficiency of translation by recycling ribosomes from one round of translation to another. This Bradyrhizobium sp. (strain ORS 278) protein is Ribosome-recycling factor.